Consider the following 315-residue polypeptide: Methionyl-tRNA formyltransferase (315 aa).

113-116 (SLLP) provides a ligand contact to (6S)-5,6,7,8-tetrahydrofolate.

The protein belongs to the Fmt family.

It carries out the reaction L-methionyl-tRNA(fMet) + (6R)-10-formyltetrahydrofolate = N-formyl-L-methionyl-tRNA(fMet) + (6S)-5,6,7,8-tetrahydrofolate + H(+). In terms of biological role, attaches a formyl group to the free amino group of methionyl-tRNA(fMet). The formyl group appears to play a dual role in the initiator identity of N-formylmethionyl-tRNA by promoting its recognition by IF2 and preventing the misappropriation of this tRNA by the elongation apparatus. The polypeptide is Methionyl-tRNA formyltransferase (Erwinia tasmaniensis (strain DSM 17950 / CFBP 7177 / CIP 109463 / NCPPB 4357 / Et1/99)).